The primary structure comprises 91 residues: Small ribosomal subunit protein uS15c (91 aa).

The protein belongs to the universal ribosomal protein uS15 family. In terms of assembly, part of the 30S ribosomal subunit.

The protein resides in the plastid. Its subcellular location is the chloroplast. In Eucalyptus globulus subsp. globulus (Tasmanian blue gum), this protein is Small ribosomal subunit protein uS15c (rps15).